We begin with the raw amino-acid sequence, 343 residues long: Serine/threonine-protein kinase SRK2C (343 aa).

One can recognise a Protein kinase domain in the interval 4–260 (YEIVKDIGSG…IEEIKNHSWF (257 aa)). Residues 10–18 (IGSGNFGVA) and lysine 33 each bind ATP. The active-site Proton acceptor is the aspartate 123. Threonine 158 carries the post-translational modification Phosphothreonine.

The protein belongs to the protein kinase superfamily. Ser/Thr protein kinase family. As to quaternary structure, interacts with I-2 and TOPP1. In terms of tissue distribution, expressed in seedlings.

It catalyses the reaction L-seryl-[protein] + ATP = O-phospho-L-seryl-[protein] + ADP + H(+). The enzyme catalyses L-threonyl-[protein] + ATP = O-phospho-L-threonyl-[protein] + ADP + H(+). Its function is as follows. Involved in gene regulation and confers tolerance to drought and osmotic stress. The sequence is that of Serine/threonine-protein kinase SRK2C (SRK2C) from Arabidopsis thaliana (Mouse-ear cress).